Reading from the N-terminus, the 140-residue chain is Chorion class A protein Ld2/Ld41 (140 aa).

The N-terminal stretch at 1–21 is a signal peptide; it reads MNSFAFLLVCIQACLVQSVFS.

It belongs to the chorion protein family.

This protein is one of many from the eggshell of the gypsy moth. The sequence is that of Chorion class A protein Ld2/Ld41 from Lymantria dispar (Gypsy moth).